The primary structure comprises 536 residues: Suppressor of cytokine signaling 5 (536 aa).

The required for interaction with IL4R stretch occupies residues 1-50 (MDKVGKMWNNFKYRCQNLFGHEGGSRSENVDMNSNRCLSVKEKNISIGDS). Positions 115-175 (SRHAPWGGKK…SVSSRTVGSR (61 aa)) are disordered. Residues 158–169 (VSSVHDMDSVSS) are compositionally biased toward low complexity. Positions 381 to 476 (CYWGVMDRYE…FFEPLLTISL (96 aa)) constitute an SH2 domain. The 50-residue stretch at 471–520 (LLTISLNRTFPFSLQYICRAVICRCTTYDGIDGLPLPSMLQDFLKEYHYK) folds into the SOCS box domain.

As to quaternary structure, interacts with IL4R; inhibits IL4 signaling. Interacts with EGFR. Interacts with ELOB and ELOC; mediates EGFR ubiquitination and degradation. Post-translationally, phosphorylated. Phosphorylation is induced by EGF.

Its pathway is protein modification; protein ubiquitination. In terms of biological role, SOCS family proteins form part of a classical negative feedback system that regulates cytokine signal transduction. May be a substrate-recognition component of a SCF-like ECS (Elongin BC-CUL2/5-SOCS-box protein) E3 ubiquitin-protein ligase complex which mediates the ubiquitination and subsequent proteasomal degradation of target proteins. Inhibits for instance EGF signaling by mediating the degradation of the EGF receptor/EGFR. Involved in the regulation of T-helper cell differentiation by inhibiting of the IL4 signaling pathway which promotes differentiation into the Th2 phenotype. Can also partially inhibit IL6 and LIF signaling. The protein is Suppressor of cytokine signaling 5 (SOCS5) of Homo sapiens (Human).